The primary structure comprises 92 residues: Small ribosomal subunit protein uS19 (92 aa).

Belongs to the universal ribosomal protein uS19 family.

Protein S19 forms a complex with S13 that binds strongly to the 16S ribosomal RNA. This Streptococcus pyogenes serotype M49 (strain NZ131) protein is Small ribosomal subunit protein uS19.